A 356-amino-acid chain; its full sequence is Phosphoribosylformylglycinamidine cyclo-ligase (356 aa).

This sequence belongs to the AIR synthase family.

Its subcellular location is the cytoplasm. It catalyses the reaction 2-formamido-N(1)-(5-O-phospho-beta-D-ribosyl)acetamidine + ATP = 5-amino-1-(5-phospho-beta-D-ribosyl)imidazole + ADP + phosphate + H(+). The protein operates within purine metabolism; IMP biosynthesis via de novo pathway; 5-amino-1-(5-phospho-D-ribosyl)imidazole from N(2)-formyl-N(1)-(5-phospho-D-ribosyl)glycinamide: step 2/2. This chain is Phosphoribosylformylglycinamidine cyclo-ligase, found in Acinetobacter baylyi (strain ATCC 33305 / BD413 / ADP1).